Consider the following 557-residue polypeptide: UvrABC system protein C (557 aa).

The GIY-YIG domain maps to 14 to 89 (EEPGVYIFKN…IKKYRPKYNV (76 aa)). Residues 194 to 229 (EEVFDYLKEKMETHSKMLDFENAAKYRDLLLNLSNV) enclose the UVR domain.

This sequence belongs to the UvrC family. Interacts with UvrB in an incision complex.

It is found in the cytoplasm. Its function is as follows. The UvrABC repair system catalyzes the recognition and processing of DNA lesions. UvrC both incises the 5' and 3' sides of the lesion. The N-terminal half is responsible for the 3' incision and the C-terminal half is responsible for the 5' incision. The polypeptide is UvrABC system protein C (Thermotoga maritima (strain ATCC 43589 / DSM 3109 / JCM 10099 / NBRC 100826 / MSB8)).